A 257-amino-acid polypeptide reads, in one-letter code: Undecaprenyl-diphosphatase (257 aa).

The next 8 membrane-spanning stretches (helical) occupy residues 4-24 (LFKAIILGIIQGITEFLPISS), 51-71 (HVGTLISLLYCFWKDWINIFF), 78-98 (LFIIIGTIPAGIAGIAFHDLI), 106-126 (LIIVVTLILVGFLMLYAEKVG), 133-153 (ITLSDAVVIGTAQAIALIPGV), 171-191 (AYAAKFSFLLSTPAIAGAAML), 207-227 (LFIIGVISAAITGIIAIKFLL), and 235-255 (LNLFIYYRWFLAVVIFLLYFF).

The protein belongs to the UppP family.

The protein resides in the cell inner membrane. It catalyses the reaction di-trans,octa-cis-undecaprenyl diphosphate + H2O = di-trans,octa-cis-undecaprenyl phosphate + phosphate + H(+). Catalyzes the dephosphorylation of undecaprenyl diphosphate (UPP). Confers resistance to bacitracin. This Thermodesulfovibrio yellowstonii (strain ATCC 51303 / DSM 11347 / YP87) protein is Undecaprenyl-diphosphatase.